We begin with the raw amino-acid sequence, 89 residues long: FXYD domain-containing ion transport regulator 4 (89 aa).

The N-terminal stretch at 1-20 (MERVTLALLLLAGLTALEAN) is a signal peptide. At 21–38 (DPFANKDDPFYYDWKNLQ) the chain is on the extracellular side. Residues 39–59 (LSGLICGGLLAIAGIAAVLSG) traverse the membrane as a helical segment. The Cytoplasmic segment spans residues 60–89 (KCKCKSSQKQHSPVPEKAIPLITPGSATTC).

Belongs to the FXYD family. As to quaternary structure, regulatory subunit of the sodium/potassium-transporting ATPase which is composed of a catalytic alpha subunit, a non-catalytic beta subunit and a regulatory subunit. The regulatory subunit, a member of the FXYD protein family, modulates the enzymatic activity in a tissue- and isoform-specific way by changing affinities of the Na+/K+-ATPase toward Na(+), K(+) or ATP.

It is found in the cell membrane. Its subcellular location is the basolateral cell membrane. Its function is as follows. Associates with and regulates the activity of the sodium/potassium-transporting ATPase (NKA) which catalyzes the hydrolysis of ATP coupled with the exchange of Na(+) and K(+) ions across the plasma membrane. Increases the apparent affinity of the transporter for Na(+) and increases NKA activity. The polypeptide is FXYD domain-containing ion transport regulator 4 (FXYD4) (Homo sapiens (Human)).